Here is a 570-residue protein sequence, read N- to C-terminus: nebramycin 5' synthase (570 aa).

The segment at 1–354 (MRVLGLNGWP…AAAAVAVELG (354 aa)) is kae1-like. Asp-12 lines the tobramycin pocket. The Proton acceptor role is filled by His-14. Lys-39 lines the ATP pocket. Fe cation-binding residues include His-114, His-118, and Asp-137. Gln-139, Gly-168, and Glu-172 together coordinate carbamoyl adenylate. Tobramycin is bound by residues Glu-172 and Asp-228. 2 residues coordinate carbamoyl adenylate: Gly-310 and Asn-314. Fe cation is bound at residue Asp-338. The interval 367 to 570 (GPEFSPDQVR…PYLVTKDLRH (204 aa)) is yrdC-like. ATP contacts are provided by Arg-418 and Arg-449. 418-419 (RA) lines the carbamoyl phosphate pocket. Residues Arg-498 and 528-530 (NTS) contribute to the carbamoyl phosphate site.

It belongs to the NodU/CmcH family. Requires Fe(2+) as cofactor.

The enzyme catalyses tobramycin + carbamoyl phosphate + ATP + H2O = nebramycin 5' + AMP + phosphate + diphosphate + H(+). It carries out the reaction kanamycin A + carbamoyl phosphate + ATP + H2O = 6''-O-carbamoylkanamycin A + AMP + phosphate + diphosphate + H(+). The catalysed reaction is carbamoyl phosphate + ATP + H2O = carbamoyl adenylate + phosphate + diphosphate. It catalyses the reaction tobramycin + carbamoyl adenylate = nebramycin 5' + AMP + H(+). The enzyme catalyses carbamoyl adenylate + kanamycin A = 6''-O-carbamoylkanamycin A + AMP + H(+). It participates in antibiotic biosynthesis; kanamycin biosynthesis. Its pathway is antibiotic biosynthesis; tobramycin biosynthesis. ADP inhibits the formation of nebramycin 5'. In terms of biological role, tobZ is involved in the biosynthesis of the 2-deoxystreptamine-containing aminoglycoside antibiotics such as nebramycin 5 and 6-O-carbamoylkanamycin. Catalyzes the hydrolysis of carbamoyl phosphate and its subsequent adenylation by ATP to yield O-carbamoyladenylate. Then it catalyzes the transfer of the carbamoyl moiety from O-carbamoyladenylate to the tobramycin 6-hydroxy group to yield nebramycin 5'. It catalyzes the same reaction with kanamycin A. These reactions are considerably slower in the presence of deoxy-ATP. In Streptoalloteichus tenebrarius (strain ATCC 17920 / DSM 40477 / JCM 4838 / CBS 697.72 / NBRC 16177 / NCIMB 11028 / NRRL B-12390 / A12253. 1 / ISP 5477) (Streptomyces tenebrarius), this protein is nebramycin 5' synthase (tobZ).